A 185-amino-acid chain; its full sequence is Segregation and condensation protein B (185 aa).

Belongs to the ScpB family. As to quaternary structure, homodimer. Homodimerization may be required to stabilize the binding of ScpA to the Smc head domains. Component of a cohesin-like complex composed of ScpA, ScpB and the Smc homodimer, in which ScpA and ScpB bind to the head domain of Smc. The presence of the three proteins is required for the association of the complex with DNA.

The protein resides in the cytoplasm. In terms of biological role, participates in chromosomal partition during cell division. May act via the formation of a condensin-like complex containing Smc and ScpA that pull DNA away from mid-cell into both cell halves. The chain is Segregation and condensation protein B from Carboxydothermus hydrogenoformans (strain ATCC BAA-161 / DSM 6008 / Z-2901).